The sequence spans 203 residues: Protein GrpE (203 aa).

The tract at residues 1–38 (MTQDQTAEQMPAAESADQSADQGPAAESAAPPAVDSER) is disordered.

The protein belongs to the GrpE family. As to quaternary structure, homodimer.

It is found in the cytoplasm. Its function is as follows. Participates actively in the response to hyperosmotic and heat shock by preventing the aggregation of stress-denatured proteins, in association with DnaK and GrpE. It is the nucleotide exchange factor for DnaK and may function as a thermosensor. Unfolded proteins bind initially to DnaJ; upon interaction with the DnaJ-bound protein, DnaK hydrolyzes its bound ATP, resulting in the formation of a stable complex. GrpE releases ADP from DnaK; ATP binding to DnaK triggers the release of the substrate protein, thus completing the reaction cycle. Several rounds of ATP-dependent interactions between DnaJ, DnaK and GrpE are required for fully efficient folding. This Paramagnetospirillum magneticum (strain ATCC 700264 / AMB-1) (Magnetospirillum magneticum) protein is Protein GrpE.